Consider the following 250-residue polypeptide: MSSALPIATNLYYDNHFQRPGVKLLPNEFYTTSEDMVLVTVLGSCVAACIQDRTAGIGGMNHFMLPDDGADVGQAASDSMRYGAYAMEVLINELIKAGGRRERFEAKVFGGGAVLAGMTTMNIGDRNSEFVRRYLALEKIRIVAEDLQGSHPRKVAFMPRTGQVMVKKLRLQQEAGVAEREQALMRQNAQARAERLAAARKRVELFSSPAASKARVELFSTPAAARPKVELFGAGSRPINSNNARTTEEA.

Belongs to the CheD family.

It carries out the reaction L-glutaminyl-[protein] + H2O = L-glutamyl-[protein] + NH4(+). Functionally, probably deamidates glutamine residues to glutamate on methyl-accepting chemotaxis receptors (MCPs), playing an important role in chemotaxis. The sequence is that of Probable chemoreceptor glutamine deamidase CheD from Paraburkholderia xenovorans (strain LB400).